The chain runs to 170 residues: Acireductone dioxygenase (170 aa).

Fe(2+) contacts are provided by H99, H101, E105, and H144. Residues H99, H101, E105, and H144 each contribute to the Ni(2+) site.

This sequence belongs to the acireductone dioxygenase (ARD) family. Monomer. Requires Fe(2+) as cofactor. Ni(2+) is required as a cofactor.

The enzyme catalyses 1,2-dihydroxy-5-(methylsulfanyl)pent-1-en-3-one + O2 = 3-(methylsulfanyl)propanoate + CO + formate + 2 H(+). It catalyses the reaction 1,2-dihydroxy-5-(methylsulfanyl)pent-1-en-3-one + O2 = 4-methylsulfanyl-2-oxobutanoate + formate + 2 H(+). It participates in amino-acid biosynthesis; L-methionine biosynthesis via salvage pathway; L-methionine from S-methyl-5-thio-alpha-D-ribose 1-phosphate: step 5/6. Catalyzes 2 different reactions between oxygen and the acireductone 1,2-dihydroxy-3-keto-5-methylthiopentene (DHK-MTPene) depending upon the metal bound in the active site. Fe-containing acireductone dioxygenase (Fe-ARD) produces formate and 2-keto-4-methylthiobutyrate (KMTB), the alpha-ketoacid precursor of methionine in the methionine recycle pathway. Ni-containing acireductone dioxygenase (Ni-ARD) produces methylthiopropionate, carbon monoxide and formate, and does not lie on the methionine recycle pathway. The sequence is that of Acireductone dioxygenase from Bacillus cereus (strain ATCC 14579 / DSM 31 / CCUG 7414 / JCM 2152 / NBRC 15305 / NCIMB 9373 / NCTC 2599 / NRRL B-3711).